We begin with the raw amino-acid sequence, 266 residues long: UPF0294 protein YafD (266 aa).

This sequence belongs to the UPF0294 family.

The protein resides in the cytoplasm. This is UPF0294 protein YafD from Salmonella newport (strain SL254).